Reading from the N-terminus, the 475-residue chain is Ribulose bisphosphate carboxylase large chain (475 aa).

The propeptide occupies Met-1–Ser-2. An N-acetylproline modification is found at Pro-3. Lys-14 carries the N6,N6,N6-trimethyllysine modification. Substrate is bound by residues Asn-123 and Thr-173. Lys-175 serves as the catalytic Proton acceptor. Position 177 (Lys-177) interacts with substrate. Positions 201, 203, and 204 each coordinate Mg(2+). The residue at position 201 (Lys-201) is an N6-carboxylysine. Residue His-294 is the Proton acceptor of the active site. Residues Arg-295, His-327, and Ser-379 each coordinate substrate.

It belongs to the RuBisCO large chain family. Type I subfamily. In terms of assembly, heterohexadecamer of 8 large chains and 8 small chains; disulfide-linked. The disulfide link is formed within the large subunit homodimers. Mg(2+) serves as cofactor. Post-translationally, the disulfide bond which can form in the large chain dimeric partners within the hexadecamer appears to be associated with oxidative stress and protein turnover.

Its subcellular location is the plastid. It is found in the chloroplast. It catalyses the reaction 2 (2R)-3-phosphoglycerate + 2 H(+) = D-ribulose 1,5-bisphosphate + CO2 + H2O. It carries out the reaction D-ribulose 1,5-bisphosphate + O2 = 2-phosphoglycolate + (2R)-3-phosphoglycerate + 2 H(+). Functionally, ruBisCO catalyzes two reactions: the carboxylation of D-ribulose 1,5-bisphosphate, the primary event in carbon dioxide fixation, as well as the oxidative fragmentation of the pentose substrate in the photorespiration process. Both reactions occur simultaneously and in competition at the same active site. The polypeptide is Ribulose bisphosphate carboxylase large chain (Pinus koraiensis (Korean pine)).